Reading from the N-terminus, the 181-residue chain is Large ribosomal subunit protein uL16 (181 aa).

This sequence belongs to the universal ribosomal protein uL16 family.

The polypeptide is Large ribosomal subunit protein uL16 (Pyrococcus horikoshii (strain ATCC 700860 / DSM 12428 / JCM 9974 / NBRC 100139 / OT-3)).